Reading from the N-terminus, the 495-residue chain is Carotenoid 3,4-desaturase (495 aa).

It belongs to the carotenoid/retinoid oxidoreductase family.

The catalysed reaction is dihydroisopentenyldehydrorhodopin + A = isopentenyldehydrorhodopin + AH2. The enzyme catalyses dihydrobisanhydrobacterioruberin + A = bisanhydrobacterioruberin + AH2. Its pathway is carotenoid biosynthesis. Functionally, involved in the biosynthesis of the acyclic C50 carotenoid bacterioruberin (BR). CrtD is involved in the desaturation reactions that form double bonds at C-3,4 of dihydroisopentenyldehydrorhodopin (DH-IDR) and C-3',4' of dihydrobisanhydrobacterioruberin (DH-BABR) to yield isopentenyld ehydrorhodopin (IDR) and bisanhydrobacterioruberin (BABR), respectively. The sequence is that of Carotenoid 3,4-desaturase from Haloarcula japonica (strain ATCC 49778 / DSM 6131 / JCM 7785 / NBRC 101032 / NCIMB 13157 / TR-1).